A 76-amino-acid chain; its full sequence is Large ribosomal subunit protein uL29 (76 aa).

This sequence belongs to the universal ribosomal protein uL29 family.

This chain is Large ribosomal subunit protein uL29, found in Corynebacterium kroppenstedtii (strain DSM 44385 / JCM 11950 / CIP 105744 / CCUG 35717).